We begin with the raw amino-acid sequence, 370 residues long: tRNA/tmRNA (uracil-C(5))-methyltransferase (370 aa).

Positions 195, 221, 226, 242, and 302 each coordinate S-adenosyl-L-methionine. C327 serves as the catalytic Nucleophile. The Proton acceptor role is filled by E361.

Belongs to the class I-like SAM-binding methyltransferase superfamily. RNA M5U methyltransferase family. TrmA subfamily.

The catalysed reaction is uridine(54) in tRNA + S-adenosyl-L-methionine = 5-methyluridine(54) in tRNA + S-adenosyl-L-homocysteine + H(+). The enzyme catalyses uridine(341) in tmRNA + S-adenosyl-L-methionine = 5-methyluridine(341) in tmRNA + S-adenosyl-L-homocysteine + H(+). Its function is as follows. Dual-specificity methyltransferase that catalyzes the formation of 5-methyluridine at position 54 (m5U54) in all tRNAs, and that of position 341 (m5U341) in tmRNA (transfer-mRNA). This Wolinella succinogenes (strain ATCC 29543 / DSM 1740 / CCUG 13145 / JCM 31913 / LMG 7466 / NCTC 11488 / FDC 602W) (Vibrio succinogenes) protein is tRNA/tmRNA (uracil-C(5))-methyltransferase.